The sequence spans 156 residues: Acyl carrier protein, mitochondrial (156 aa).

The transit peptide at 1–68 (MASRVLSAYV…GRVTQLCRQY (68 aa)) directs the protein to the mitochondrion. Positions 77–152 (EGIQDRVLYV…EIVDYIADKK (76 aa)) constitute a Carrier domain. Residue Lys88 is modified to N6-acetyllysine. Ser112 is subject to O-(pantetheine 4'-phosphoryl)serine.

The protein belongs to the acyl carrier protein (ACP) family. Mammalian complex I is composed of 45 different subunits. Interacts with ETFRF1. Identified in a complex composed of MALSU1, MIEF1 upstream open reading frame protein and NDUFAB1; within the trimeric complex, MIEF1 upstream open reading frame protein functions as a bridging scaffold that interacts with MALSU1 on one side, and with NDUFAB1 on the other side. The complex interacts with the mitochondrial large ribosomal subunit. Interacts with alpha-1-microglobulin chain; this interaction is required for the maintenance of mitochondrial redox homeostasis. Component of the mitochondrial core iron-sulfur cluster (ISC) complex composed of NFS1, LYRM4, NDUFAB1, ISCU, FXN, and FDX2; this complex is a heterohexamer containing two copies of each monomer. Component of the cyteine desulfurase complex composed of NFS1, LYRM4 and NDUFAB1; this complex contributes to the stability and cysteine desulfurase activity of NFS1. Phosphopantetheinylation at Ser-112 is essential for interactions with LYR motif-containing proteins.

It localises to the mitochondrion. Functionally, carrier of the growing fatty acid chain in fatty acid biosynthesis. Accessory and non-catalytic subunit of the mitochondrial membrane respiratory chain NADH dehydrogenase (Complex I), which functions in the transfer of electrons from NADH to the respiratory chain. Accessory protein, of the core iron-sulfur cluster (ISC) assembly complex, that regulates, in association with LYRM4, the stability and the cysteine desulfurase activity of NFS1 and participates in the [2Fe-2S] clusters assembly on the scaffolding protein ISCU. The core iron-sulfur cluster (ISC) assembly complex is involved in the de novo synthesis of a [2Fe-2S] cluster, the first step of the mitochondrial iron-sulfur protein biogenesis. This process is initiated by the cysteine desulfurase complex (NFS1:LYRM4:NDUFAB1) that produces persulfide which is delivered on the scaffold protein ISCU in a FXN-dependent manner. Then this complex is stabilized by FDX2 which provides reducing equivalents to accomplish the [2Fe-2S] cluster assembly. Finally, the [2Fe-2S] cluster is transferred from ISCU to chaperone proteins, including HSCB, HSPA9 and GLRX5. This is Acyl carrier protein, mitochondrial from Pongo pygmaeus (Bornean orangutan).